We begin with the raw amino-acid sequence, 1123 residues long: Rabphilin-1 (1123 aa).

The span at 1–17 shows a compositional bias: basic residues; sequence MTKSTKLRHCKQKKKKP. Disordered stretches follow at residues 1–56 and 88–140; these read MTKS…GSRS and SAHN…PSTH. Residues 36-46 show a composition bias toward low complexity; the sequence is DAATTTSTTDA. The region spanning 215 to 341 is the RabBD domain; it reads KAQTGSITAA…KKSGAWFYKE (127 aa). The segment at 263–328 adopts an FYVE-type zinc-finger fold; the sequence is GNGVTHCLLC…LCKICSEARE (66 aa). Positions 269, 272, 288, 291, 296, 300, 320, and 323 each coordinate Zn(2+). 4 stretches are compositionally biased toward polar residues: residues 365-375, 387-400, 410-428, and 487-497; these read PNASSAATPLS, TMPS…TTPK, PGLQ…GTRR, and ASSSDGESFVQ. 3 disordered regions span residues 365–710, 737–779, and 796–818; these read PNAS…VGSA, TSRA…LRTS, and HIVS…VPIP. The segment covering 531 to 541 has biased composition (basic and acidic residues); that stretch reads SRREANMERFS. Low complexity predominate over residues 563–574; that stretch reads ESRPSTRSTSPR. 2 stretches are compositionally biased toward polar residues: residues 605 to 632 and 649 to 666; these read VVQS…QQQA and PDRT…TSLV. A compositionally biased stretch (low complexity) spans 742–753; the sequence is SPLAASSSFLSS. Residues 756–768 show a composition bias toward basic and acidic residues; it reads DDTKQKNRRRDGV. Residues 803 to 818 are compositionally biased toward low complexity; sequence TSSTTSNQNHTSVPIP. 2 C2 domains span residues 844-967 and 984-1103; these read SLGS…NLYL and DRGK…RQWI. Positions 875, 881, 936, 938, 943, 1015, 1021, 1075, 1077, and 1083 each coordinate Ca(2+).

Ca(2+) serves as cofactor.

The protein localises to the synapse. Its function is as follows. Rab-3 effector. The protein is Rabphilin-1 (rbf-1) of Caenorhabditis elegans.